A 529-amino-acid chain; its full sequence is Bifunctional purine biosynthesis protein PurH (529 aa).

The region spanning 1-148 is the MGS-like domain; the sequence is MQQRRPVRRA…KNHKDVAIVV (148 aa).

This sequence belongs to the PurH family.

The catalysed reaction is (6R)-10-formyltetrahydrofolate + 5-amino-1-(5-phospho-beta-D-ribosyl)imidazole-4-carboxamide = 5-formamido-1-(5-phospho-D-ribosyl)imidazole-4-carboxamide + (6S)-5,6,7,8-tetrahydrofolate. It catalyses the reaction IMP + H2O = 5-formamido-1-(5-phospho-D-ribosyl)imidazole-4-carboxamide. Its pathway is purine metabolism; IMP biosynthesis via de novo pathway; 5-formamido-1-(5-phospho-D-ribosyl)imidazole-4-carboxamide from 5-amino-1-(5-phospho-D-ribosyl)imidazole-4-carboxamide (10-formyl THF route): step 1/1. The protein operates within purine metabolism; IMP biosynthesis via de novo pathway; IMP from 5-formamido-1-(5-phospho-D-ribosyl)imidazole-4-carboxamide: step 1/1. This is Bifunctional purine biosynthesis protein PurH from Salmonella newport (strain SL254).